The chain runs to 246 residues: Small ribosomal subunit protein uS2 (246 aa).

It belongs to the universal ribosomal protein uS2 family.

The sequence is that of Small ribosomal subunit protein uS2 from Helicobacter acinonychis (strain Sheeba).